The primary structure comprises 534 residues: CTP synthase (534 aa).

The segment at 1 to 265 (MKYIVVTGGV…TTQLMKHLRL (265 aa)) is amidoligase domain. A CTP-binding site is contributed by S12. S12 provides a ligand contact to UTP. Residue 13 to 18 (GLGKGI) participates in ATP binding. Y53 contributes to the L-glutamine binding site. ATP is bound at residue D70. Positions 70 and 140 each coordinate Mg(2+). CTP is bound by residues 147 to 149 (DIE), 186 to 191 (KTKPTQ), and K222. UTP-binding positions include 186–191 (KTKPTQ) and K222. Residues 289-530 (KLAIVGKYTN…VRAMCKYRKE (242 aa)) enclose the Glutamine amidotransferase type-1 domain. G352 is an L-glutamine binding site. C379 serves as the catalytic Nucleophile; for glutamine hydrolysis. L-glutamine contacts are provided by residues 380 to 383 (LGMQ), E403, and R460. Residues H503 and E505 contribute to the active site.

Belongs to the CTP synthase family. As to quaternary structure, homotetramer.

It catalyses the reaction UTP + L-glutamine + ATP + H2O = CTP + L-glutamate + ADP + phosphate + 2 H(+). It carries out the reaction L-glutamine + H2O = L-glutamate + NH4(+). The catalysed reaction is UTP + NH4(+) + ATP = CTP + ADP + phosphate + 2 H(+). The protein operates within pyrimidine metabolism; CTP biosynthesis via de novo pathway; CTP from UDP: step 2/2. Allosterically activated by GTP, when glutamine is the substrate; GTP has no effect on the reaction when ammonia is the substrate. The allosteric effector GTP functions by stabilizing the protein conformation that binds the tetrahedral intermediate(s) formed during glutamine hydrolysis. Inhibited by the product CTP, via allosteric rather than competitive inhibition. Functionally, catalyzes the ATP-dependent amination of UTP to CTP with either L-glutamine or ammonia as the source of nitrogen. Regulates intracellular CTP levels through interactions with the four ribonucleotide triphosphates. The protein is CTP synthase of Methanosarcina mazei (strain ATCC BAA-159 / DSM 3647 / Goe1 / Go1 / JCM 11833 / OCM 88) (Methanosarcina frisia).